The following is a 355-amino-acid chain: Methylthioribose-1-phosphate isomerase (355 aa).

Residues 52–54 (RGA), arginine 95, and glutamine 204 contribute to the substrate site. Aspartate 245 functions as the Proton donor in the catalytic mechanism. Position 255–256 (255–256 (NK)) interacts with substrate.

The protein belongs to the eIF-2B alpha/beta/delta subunits family. MtnA subfamily.

The enzyme catalyses 5-(methylsulfanyl)-alpha-D-ribose 1-phosphate = 5-(methylsulfanyl)-D-ribulose 1-phosphate. It participates in amino-acid biosynthesis; L-methionine biosynthesis via salvage pathway; L-methionine from S-methyl-5-thio-alpha-D-ribose 1-phosphate: step 1/6. Catalyzes the interconversion of methylthioribose-1-phosphate (MTR-1-P) into methylthioribulose-1-phosphate (MTRu-1-P). This chain is Methylthioribose-1-phosphate isomerase, found in Acaryochloris marina (strain MBIC 11017).